The following is a 329-amino-acid chain: Quinone-oxidoreductase QR1, chloroplastic (329 aa).

It belongs to the zinc-containing alcohol dehydrogenase family. Quinone oxidoreductase subfamily.

Its subcellular location is the plastid. The protein resides in the chloroplast outer membrane. The catalysed reaction is 2 a quinone + NADPH + H(+) = 2 a 1,4-benzosemiquinone + NADP(+). With respect to regulation, inhibited by dicumarol. Its function is as follows. NADPH-dependent single-electron reducing quinone reductase. Involved in haustorium initiation in parasitic plants through redox cycling of exogenous haustorium-inducing factors. Can use 9,10-phenanthrenequinone (PAQ), 1,2-naphthoquinone, 5-hydroxy-1,4-naphthoquinone (juglone) and 2,6-dimethoxy-p-benzoquinone (DMBQ) as substrates, but has no activity with menadione, diamide, 2,3-dimethoxy-5-methyl-1,4-benzoquinone or 1,4-naphthoquinone. The chain is Quinone-oxidoreductase QR1, chloroplastic from Triphysaria versicolor (Yellow owl's clover).